The sequence spans 118 residues: NADH-quinone oxidoreductase subunit A (118 aa).

Helical transmembrane passes span 8 to 28 (IGIF…LAFF), 64 to 84 (ALAF…AVAF), and 87 to 107 (VGLY…AGLL).

Belongs to the complex I subunit 3 family. As to quaternary structure, NDH-1 is composed of 14 different subunits. Subunits NuoA, H, J, K, L, M, N constitute the membrane sector of the complex.

It localises to the cell membrane. The enzyme catalyses a quinone + NADH + 5 H(+)(in) = a quinol + NAD(+) + 4 H(+)(out). NDH-1 shuttles electrons from NADH, via FMN and iron-sulfur (Fe-S) centers, to quinones in the respiratory chain. The immediate electron acceptor for the enzyme in this species is believed to be ubiquinone. Couples the redox reaction to proton translocation (for every two electrons transferred, four hydrogen ions are translocated across the cytoplasmic membrane), and thus conserves the redox energy in a proton gradient. This is NADH-quinone oxidoreductase subunit A from Chloroflexus aurantiacus (strain ATCC 29366 / DSM 635 / J-10-fl).